We begin with the raw amino-acid sequence, 378 residues long: Outer membrane porin C (378 aa).

Residues 1-21 (MKVKVLSLLVPALLVAGAANA) form the signal peptide.

Belongs to the Gram-negative porin family. In terms of assembly, homotrimer.

Its subcellular location is the cell outer membrane. Its function is as follows. Forms pores that allow passive diffusion of small molecules across the outer membrane. This chain is Outer membrane porin C (ompC), found in Salmonella typhimurium (strain LT2 / SGSC1412 / ATCC 700720).